A 326-amino-acid polypeptide reads, in one-letter code: tRNA-modifying protein YgfZ (326 aa).

Positions 27 and 189 each coordinate folate.

The protein belongs to the tRNA-modifying YgfZ family.

Its subcellular location is the cytoplasm. Its function is as follows. Folate-binding protein involved in regulating the level of ATP-DnaA and in the modification of some tRNAs. It is probably a key factor in regulatory networks that act via tRNA modification, such as initiation of chromosomal replication. The polypeptide is tRNA-modifying protein YgfZ (Escherichia coli O127:H6 (strain E2348/69 / EPEC)).